Here is a 469-residue protein sequence, read N- to C-terminus: UDP-N-acetylmuramate--L-alanine ligase (469 aa).

120-126 serves as a coordination point for ATP; the sequence is GTHGKTT.

Belongs to the MurCDEF family.

It is found in the cytoplasm. It carries out the reaction UDP-N-acetyl-alpha-D-muramate + L-alanine + ATP = UDP-N-acetyl-alpha-D-muramoyl-L-alanine + ADP + phosphate + H(+). Its pathway is cell wall biogenesis; peptidoglycan biosynthesis. Cell wall formation. The polypeptide is UDP-N-acetylmuramate--L-alanine ligase (Acetivibrio thermocellus (strain ATCC 27405 / DSM 1237 / JCM 9322 / NBRC 103400 / NCIMB 10682 / NRRL B-4536 / VPI 7372) (Clostridium thermocellum)).